The sequence spans 558 residues: Glucose-6-phosphate isomerase (558 aa).

Glu363 acts as the Proton donor in catalysis. Residues His394 and Lys522 contribute to the active site.

The protein belongs to the GPI family.

The protein resides in the cytoplasm. It catalyses the reaction alpha-D-glucose 6-phosphate = beta-D-fructose 6-phosphate. It functions in the pathway carbohydrate biosynthesis; gluconeogenesis. Its pathway is carbohydrate degradation; glycolysis; D-glyceraldehyde 3-phosphate and glycerone phosphate from D-glucose: step 2/4. Functionally, catalyzes the reversible isomerization of glucose-6-phosphate to fructose-6-phosphate. This chain is Glucose-6-phosphate isomerase, found in Blochmanniella floridana.